The chain runs to 349 residues: MAAEEEEVDSADTGERSGWLTGWLPTWCPTSISHLKEAEEKMLKCVPCTYKKEPVRISNGNKIWTLKFSHNISNKTPLVLLHGFGGGLGLWALNFGDLCTNRPVYAFDLLGFGRSSRPRFDSDAEEVENQFVESIEEWRCALGLDKMILLGHNLGGFLAAAYSLKYPSRVNHLILVEPWGFPERPDLADQDRPIPVWIRALGAALTPFNPLAGLRIAGPFGLSLVQRLRPDFKRKYSSMFEDDTVTEYIYHCNVQTPSGETAFKNMTIPYGWAKRPMLQRIGKMHPDIPVSVIFGARSCIDGNSGTSIQSLRPHSYVKTIAILGAGHYVYADQPEEFNQKVKEICDTVD.

A2 carries the N-acetylalanine modification. The 108-residue stretch at 77 to 184 (PLVLLHGFGG…LVEPWGFPER (108 aa)) folds into the AB hydrolase-1 domain. Phosphoserine is present on S122. The HXXXXD motif motif lies at 327–332 (HYVYAD).

The protein belongs to the peptidase S33 family. ABHD4/ABHD5 subfamily. Interacts with ADRP, PLIN and PNPLA2. Interacts with PLIN5; promotes interaction with PNPLA2. As to expression, widely expressed in various tissues, including lymphocytes, liver, skeletal muscle and brain. Expressed by upper epidermal layers and dermal fibroblasts in skin, hepatocytes and neurons (at protein level).

Its subcellular location is the cytoplasm. It localises to the lipid droplet. The protein localises to the cytosol. The enzyme catalyses a 1-acyl-sn-glycero-3-phosphate + an acyl-CoA = a 1,2-diacyl-sn-glycero-3-phosphate + CoA. It carries out the reaction 1-(9Z-octadecenoyl)-sn-glycero-3-phosphate + hexadecanoyl-CoA = 1-(9Z)-octadecenoyl-2-hexadecanoyl-sn-glycero-3-phosphate + CoA. The catalysed reaction is 1-(9Z-octadecenoyl)-sn-glycero-3-phosphate + octadecanoyl-CoA = 1-(9Z-octadecenoyl)-2-octadecanoyl-sn-glycero-3-phosphate + CoA. It catalyses the reaction 1-(9Z-octadecenoyl)-sn-glycero-3-phosphate + (9Z)-octadecenoyl-CoA = 1,2-di-(9Z-octadecenoyl)-sn-glycero-3-phosphate + CoA. The enzyme catalyses 1-(9Z-octadecenoyl)-sn-glycero-3-phosphate + (5Z,8Z,11Z,14Z)-eicosatetraenoyl-CoA = 1-(9Z)-octadecenoyl-2-(5Z,8Z,11Z,14Z)-eicosatetraenoyl-sn-glycero-3-phosphate + CoA. It carries out the reaction eicosanoyl-CoA + 1-(9Z-octadecenoyl)-sn-glycero-3-phosphate = 1-(9Z)-octadecenoyl-2-eicosanoyl-sn-glycero-3-phosphate + CoA. The catalysed reaction is 1-hexadecanoyl-sn-glycero-3-phosphate + (9Z)-octadecenoyl-CoA = 1-hexadecanoyl-2-(9Z-octadecenoyl)-sn-glycero-3-phosphate + CoA. It catalyses the reaction 1-octadecanoyl-sn-glycero-3-phosphate + (9Z)-octadecenoyl-CoA = 1-octadecanoyl-2-(9Z-octadecenoyl)-sn-glycero-3-phosphate + CoA. The enzyme catalyses 1-(5Z,8Z,11Z,14Z-eicosatetraenoyl)-sn-glycero-3-phosphate + (9Z)-octadecenoyl-CoA = 1-(5Z,8Z,11Z,14Z)-eicosatetraenoyl-2-(9Z)-octadecenoyl-sn-glycero-3-phosphate + CoA. With respect to regulation, acyltransferase activity is inhibited by detergents such as Triton X-100 and 3-[(3-cholamidopropyl)dimethylammonio]-1-propanesulfonate (CHAPS). Acyltransferase activity is inhibited by the presence of magnesium and calcium. Coenzyme A-dependent lysophosphatidic acid acyltransferase that catalyzes the transfer of an acyl group on a lysophosphatidic acid. Functions preferentially with 1-oleoyl-lysophosphatidic acid followed by 1-palmitoyl-lysophosphatidic acid, 1-stearoyl-lysophosphatidic acid and 1-arachidonoyl-lysophosphatidic acid as lipid acceptor. Functions preferentially with arachidonoyl-CoA followed by oleoyl-CoA as acyl group donors. Functions in phosphatidic acid biosynthesis. May regulate the cellular storage of triacylglycerol through activation of the phospholipase PNPLA2. Involved in keratinocyte differentiation. Regulates lipid droplet fusion. This is 1-acylglycerol-3-phosphate O-acyltransferase ABHD5 from Homo sapiens (Human).